Consider the following 570-residue polypeptide: Proline--tRNA ligase (570 aa).

This sequence belongs to the class-II aminoacyl-tRNA synthetase family. ProS type 1 subfamily. Homodimer.

It localises to the cytoplasm. It catalyses the reaction tRNA(Pro) + L-proline + ATP = L-prolyl-tRNA(Pro) + AMP + diphosphate. Its function is as follows. Catalyzes the attachment of proline to tRNA(Pro) in a two-step reaction: proline is first activated by ATP to form Pro-AMP and then transferred to the acceptor end of tRNA(Pro). As ProRS can inadvertently accommodate and process non-cognate amino acids such as alanine and cysteine, to avoid such errors it has two additional distinct editing activities against alanine. One activity is designated as 'pretransfer' editing and involves the tRNA(Pro)-independent hydrolysis of activated Ala-AMP. The other activity is designated 'posttransfer' editing and involves deacylation of mischarged Ala-tRNA(Pro). The misacylated Cys-tRNA(Pro) is not edited by ProRS. This chain is Proline--tRNA ligase, found in Shewanella pealeana (strain ATCC 700345 / ANG-SQ1).